The following is a 202-amino-acid chain: Dephospho-CoA kinase (202 aa).

Residues 4-201 form the DPCK domain; that stretch reads VIGLTGGIAS…QKYLAMSKQN (198 aa). 12-17 lines the ATP pocket; sequence ASGKTT.

Belongs to the CoaE family.

Its subcellular location is the cytoplasm. The catalysed reaction is 3'-dephospho-CoA + ATP = ADP + CoA + H(+). It participates in cofactor biosynthesis; coenzyme A biosynthesis; CoA from (R)-pantothenate: step 5/5. Catalyzes the phosphorylation of the 3'-hydroxyl group of dephosphocoenzyme A to form coenzyme A. This chain is Dephospho-CoA kinase, found in Vibrio vulnificus (strain YJ016).